A 384-amino-acid polypeptide reads, in one-letter code: MAFHFRRLCFFSALLAVVLQLLHGVSGQLVVVEEPISAPPPPLVDLNTGDGIVPALFVFGDSLIDNGNNNNIPSFAKANYFPYGIDFNGGPTGRFCNGLTMVDGIAQLLGLPLIPAYSEATGDQVLRGVNYASAAAGILPDTGGNFVGRIPFDQQIHNFETTLDQVASKSGGAVAIADSVTRSLFFIGMGSNDYLNNYLMPNFPTRNQYNSQQFGDLLVQHYTDQLTRLYNLGGRKFVVAGLGRMGCIPSILAQGNDGKCSEEVNQLVLPFNTNVKTMISNLNQNLPDAKFIYLDIAHMFEDIVANQAAYGLTTMDKGCCGIGKNRGQITCLPFETPCPNRDQYVFWDAFHPTEKVNLIMAKKAFAGDRTVAYPINIQQLASLN.

Positions 1-27 (MAFHFRRLCFFSALLAVVLQLLHGVSG) are cleaved as a signal peptide. The active-site Nucleophile is serine 62. Active-site residues include aspartate 348 and histidine 351.

This sequence belongs to the 'GDSL' lipolytic enzyme family.

Its subcellular location is the secreted. This chain is GDSL esterase/lipase At1g71691, found in Arabidopsis thaliana (Mouse-ear cress).